An 85-amino-acid polypeptide reads, in one-letter code: Large ribosomal subunit protein bL31B (85 aa).

Belongs to the bacterial ribosomal protein bL31 family. Type B subfamily. Part of the 50S ribosomal subunit.

The protein is Large ribosomal subunit protein bL31B of Vibrio cholerae serotype O1 (strain ATCC 39541 / Classical Ogawa 395 / O395).